A 53-amino-acid polypeptide reads, in one-letter code: Collagen alpha-1(I) chain (53 aa).

Residues 1–53 (SYGYBZKSAGVSVPGPMGPSGPRGLPGPPGAPGPZGFZGPPGZPGZPGSSGPM) form a disordered region. Lys7 is subject to Allysine. Residue Ser8 is modified to Phosphoserine. Residues 10–23 (GVSVPGPMGPSGPR) are compositionally biased toward low complexity. 4-hydroxyproline is present on residues Pro26, Pro29, Pro32, Pro41, Pro44, and Pro47. Residues 34-53 (PZGFZGPPGZPGZPGSSGPM) are compositionally biased toward low complexity.

Belongs to the fibrillar collagen family. In terms of assembly, trimers of one alpha 2(I) and two alpha 1(I) chains. Interacts with MRC2. Interacts with TRAM2. Interacts with MFAP4 in a Ca (2+)-dependent manner. Post-translationally, contains mostly 4-hydroxyproline. Proline residues at the third position of the tripeptide repeating unit (G-X-Y) are hydroxylated in some or all of the chains. Contains 3-hydroxyproline at a few sites. This modification occurs on the first proline residue in the sequence motif Gly-Pro-Hyp, where Hyp is 4-hydroxyproline. In terms of processing, lysine residues at the third position of the tripeptide repeating unit (G-X-Y) are 5-hydroxylated in some or all of the chains. Post-translationally, O-glycosylated on hydroxylated lysine residues. The O-linked glycan consists of a Glc-Gal disaccharide. As to expression, forms the fibrils of tendon, ligaments and bones. In bones the fibrils are mineralized with calcium hydroxyapatite.

It localises to the secreted. Its subcellular location is the extracellular space. It is found in the extracellular matrix. Its function is as follows. Type I collagen is a member of group I collagen (fibrillar forming collagen). The protein is Collagen alpha-1(I) chain (COL1A1) of Oryctolagus cuniculus (Rabbit).